A 462-amino-acid polypeptide reads, in one-letter code: Malonyl-coenzyme:anthocyanin 5-O-glucoside-6'''-O-malonyltransferase (462 aa).

Residues histidine 167 and aspartate 390 each act as proton acceptor in the active site.

Belongs to the plant acyltransferase family. In terms of tissue distribution, detected in petals and sepals, and at lower levels in bracts and red stems.

It carries out the reaction pelargonidin 3-O-(6-O-[(E)-caffeoyl]-beta-D-glucoside) 5-O-beta-D-glucoside + malonyl-CoA = 4'''-demalonylsalvianin + CoA. It participates in pigment biosynthesis; anthocyanin biosynthesis. Completely inhibited by 10 mM p-coumaric acid, this inhibition is rapid, reversible and non-competitive. Completely inhibited by 0.1 mM Cu(2+), 0.1 mM Hg(2+) and 10 mM caffeic acid. Partially inhibited by 5 mM N-ethylmaleimide, 1 mM diethylpyrocarbonate and 1 mM acetyl-CoA. Functionally, catalyzes the transfer of a malonyl group from malonyl-CoA to the 6'''-hydroxyl group of the 5-glucosyl moiety of anthocyanins. Active towards bisdemalonylsalvianin (pelargonidin 3-O-(6-caffeoyl-beta-D-glucoside) 5-O-beta-D-glucoside) and shisonin, but not towards nodemalonylsalvianin, salvianin, pelargonidin 3,5-diglucoside and delphinidin 3,5-diglucoside. The polypeptide is Malonyl-coenzyme:anthocyanin 5-O-glucoside-6'''-O-malonyltransferase (Salvia splendens (Scarlet sage)).